A 498-amino-acid chain; its full sequence is Lysine--tRNA ligase (498 aa).

Mg(2+)-binding residues include E409 and E416.

The protein belongs to the class-II aminoacyl-tRNA synthetase family. In terms of assembly, homodimer. The cofactor is Mg(2+).

It localises to the cytoplasm. The enzyme catalyses tRNA(Lys) + L-lysine + ATP = L-lysyl-tRNA(Lys) + AMP + diphosphate. This Teredinibacter turnerae (strain ATCC 39867 / T7901) protein is Lysine--tRNA ligase.